Reading from the N-terminus, the 466-residue chain is Ribulose bisphosphate carboxylase large chain (466 aa).

Residue lysine 5 is modified to N6,N6,N6-trimethyllysine. Substrate-binding residues include asparagine 114 and threonine 164. Residue lysine 166 is the Proton acceptor of the active site. Lysine 168 is a binding site for substrate. The Mg(2+) site is built by lysine 192, aspartate 194, and glutamate 195. Residue lysine 192 is modified to N6-carboxylysine. The Proton acceptor role is filled by histidine 285. The substrate site is built by arginine 286, histidine 318, and serine 370.

It belongs to the RuBisCO large chain family. Type I subfamily. Heterohexadecamer of 8 large chains and 8 small chains; disulfide-linked. The disulfide link is formed within the large subunit homodimers. The cofactor is Mg(2+). Post-translationally, the disulfide bond which can form in the large chain dimeric partners within the hexadecamer appears to be associated with oxidative stress and protein turnover.

The protein localises to the plastid. Its subcellular location is the chloroplast. It catalyses the reaction 2 (2R)-3-phosphoglycerate + 2 H(+) = D-ribulose 1,5-bisphosphate + CO2 + H2O. It carries out the reaction D-ribulose 1,5-bisphosphate + O2 = 2-phosphoglycolate + (2R)-3-phosphoglycerate + 2 H(+). Its function is as follows. RuBisCO catalyzes two reactions: the carboxylation of D-ribulose 1,5-bisphosphate, the primary event in carbon dioxide fixation, as well as the oxidative fragmentation of the pentose substrate in the photorespiration process. Both reactions occur simultaneously and in competition at the same active site. The polypeptide is Ribulose bisphosphate carboxylase large chain (Eremothamnus marlothianus).